Reading from the N-terminus, the 449-residue chain is Trigger factor (449 aa).

Positions 174 to 261 constitute a PPIase FKBP-type domain; the sequence is GDIAVVGFKG…LKDLKTRELP (88 aa). Residues 430–449 form a disordered region; it reads ENSTVTEKAPDKDKPSVTDA. Positions 437–449 are enriched in basic and acidic residues; that stretch reads KAPDKDKPSVTDA.

The protein belongs to the FKBP-type PPIase family. Tig subfamily.

The protein localises to the cytoplasm. It carries out the reaction [protein]-peptidylproline (omega=180) = [protein]-peptidylproline (omega=0). In terms of biological role, involved in protein export. Acts as a chaperone by maintaining the newly synthesized protein in an open conformation. Functions as a peptidyl-prolyl cis-trans isomerase. In Synechococcus sp. (strain CC9311), this protein is Trigger factor.